A 116-amino-acid polypeptide reads, in one-letter code: Large ribosomal subunit protein bL17 (116 aa).

Belongs to the bacterial ribosomal protein bL17 family. As to quaternary structure, part of the 50S ribosomal subunit. Contacts protein L32.

The polypeptide is Large ribosomal subunit protein bL17 (Sulfurovum sp. (strain NBC37-1)).